We begin with the raw amino-acid sequence, 310 residues long: Putative S-adenosyl-L-methionine-dependent methyltransferase MAP_2076c (310 aa).

S-adenosyl-L-methionine-binding positions include Asp-131 and 160–161; that span reads DL.

Belongs to the UPF0677 family.

Functionally, exhibits S-adenosyl-L-methionine-dependent methyltransferase activity. The chain is Putative S-adenosyl-L-methionine-dependent methyltransferase MAP_2076c from Mycolicibacterium paratuberculosis (strain ATCC BAA-968 / K-10) (Mycobacterium paratuberculosis).